The primary structure comprises 916 residues: Protein translocase subunit SecA (916 aa).

ATP contacts are provided by residues Gln86, 104–108 (GEGKT), and Asp494. A disordered region spans residues 859–916 (LEAPEKPAQLQYTAPSEGGGTQTRVETRSTGRSGNPAKAAEQDAAKDAAKRPAKKKRR). Polar residues predominate over residues 880–891 (QTRVETRSTGRS). A compositionally biased stretch (basic and acidic residues) spans 898 to 908 (AEQDAAKDAAK).

The protein belongs to the SecA family. Monomer and homodimer. Part of the essential Sec protein translocation apparatus which comprises SecA, SecYEG and auxiliary proteins SecDF. Other proteins may also be involved.

It is found in the cell membrane. The protein resides in the cytoplasm. It catalyses the reaction ATP + H2O + cellular proteinSide 1 = ADP + phosphate + cellular proteinSide 2.. Its function is as follows. Part of the Sec protein translocase complex. Interacts with the SecYEG preprotein conducting channel. Has a central role in coupling the hydrolysis of ATP to the transfer of proteins into and across the cell membrane, serving as an ATP-driven molecular motor driving the stepwise translocation of polypeptide chains across the membrane. The chain is Protein translocase subunit SecA from Pseudarthrobacter chlorophenolicus (strain ATCC 700700 / DSM 12829 / CIP 107037 / JCM 12360 / KCTC 9906 / NCIMB 13794 / A6) (Arthrobacter chlorophenolicus).